The sequence spans 1604 residues: Calmodulin-regulated spectrin-associated protein 1 (1604 aa).

S216 carries the phosphoserine modification. Positions 235 to 350 constitute a Calponin-homology (CH) domain; that stretch reads PVDFARVVRY…FIAELFWWFE (116 aa). Residues S390, S394, and S435 each carry the phosphoserine modification. The segment at 394–413 is disordered; sequence SPAAMSPADLPPSTQPLTEG. Residues 444–491 are disordered; it reads RQKQQKVSQAEEIPDQRHRSNSLTRADGQPRGAAIAWPDKKNRPVSQP. T531 is modified (phosphothreonine). A phosphoserine mark is found at S571, S574, S581, S593, S607, S647, S739, S745, S755, and S757. The interval 642 to 671 is disordered; it reads MAKRPSEGSQPLVRKKVTGSHGSRDLNRTF. Residues 784 to 806 are compositionally biased toward basic and acidic residues; that stretch reads EEESAKLQEDMKVKEHEDKDDAS. Disordered stretches follow at residues 784–824 and 842–888; these read EEES…SMSM and LNSC…KDPA. Composition is skewed to low complexity over residues 813–824 and 847–858; these read LSTTSQLSSMSM and TKSSTSSSQKTT. Residues 874-886 show a composition bias toward basic and acidic residues; sequence QKREQSPSRHSKD. The segment at 888–909 is sufficient for interaction with SPTBN1; that stretch reads ASLLASELVQLHMQLEEKRRAI. Coiled coils occupy residues 890–926 and 1026–1058; these read LLAS…QRLK and DVNE…QEQL. The tract at residues 920–939 is sufficient for interaction with calmodulin; sequence SARQRLKLGKAAFLHVVKKG. 3 disordered regions span residues 1085–1163, 1246–1271, and 1298–1448; these read FVEP…GELP, PDED…KPGV, and RKAE…DRDW. Phosphoserine is present on S1090. Positions 1113-1124 are enriched in basic and acidic residues; it reads RPAELKVPKDRQ. Residues 1125–1137 are compositionally biased toward polar residues; it reads QGCSRSKTPTPSV. The residue at position 1154 (S1154) is a Phosphoserine. Basic and acidic residues-rich tracts occupy residues 1246-1258 and 1298-1348; these read PDED…HESS and RKAE…EYLR. Residues 1286 to 1357 are a coiled coil; the sequence is AKKRAAFLLK…RRKQQQALEE (72 aa). Basic residues predominate over residues 1363–1374; that stretch reads PKSKPKKPRPKS. Polar residues predominate over residues 1382–1394; the sequence is SDSGTKCSSTPDN. A compositionally biased stretch (low complexity) spans 1395–1412; it reads LSQTHSGSSLSLASAATT. Phosphoserine occurs at positions 1400 and 1429. In terms of domain architecture, CKK spans 1465 to 1599; it reads GPKLFKEPSS…QPKRPTVPKK (135 aa). A Phosphotyrosine modification is found at Y1539.

This sequence belongs to the CAMSAP1 family. Interacts with spectrin via SPTBN1; the interaction is direct. Interacts with calmodulin; calcium-dependent it prevents interaction with spectrin. As to expression, in brain, specifically expressed in astrocytes (at protein level).

Its subcellular location is the cytoplasm. The protein resides in the cytoskeleton. Its function is as follows. Key microtubule-organizing protein that specifically binds the minus-end of non-centrosomal microtubules and regulates their dynamics and organization. Specifically recognizes growing microtubule minus-ends and stabilizes microtubules. Acts on free microtubule minus-ends that are not capped by microtubule-nucleating proteins or other factors and protects microtubule minus-ends from depolymerization. In contrast to CAMSAP2 and CAMSAP3, tracks along the growing tips of minus-end microtubules without significantly affecting the polymerization rate: binds at the very tip of the microtubules minus-end and acts as a minus-end tracking protein (-TIP) that dissociates from microtubules after allowing tubulin incorporation. Through interaction with spectrin may regulate neurite outgrowth. The protein is Calmodulin-regulated spectrin-associated protein 1 (Camsap1) of Rattus norvegicus (Rat).